The sequence spans 246 residues: Ubiquinone biosynthesis O-methyltransferase (246 aa).

4 residues coordinate S-adenosyl-L-methionine: R44, G63, D84, and M128.

The protein belongs to the methyltransferase superfamily. UbiG/COQ3 family.

It carries out the reaction a 3-demethylubiquinol + S-adenosyl-L-methionine = a ubiquinol + S-adenosyl-L-homocysteine + H(+). It catalyses the reaction a 3-(all-trans-polyprenyl)benzene-1,2-diol + S-adenosyl-L-methionine = a 2-methoxy-6-(all-trans-polyprenyl)phenol + S-adenosyl-L-homocysteine + H(+). It participates in cofactor biosynthesis; ubiquinone biosynthesis. In terms of biological role, O-methyltransferase that catalyzes the 2 O-methylation steps in the ubiquinone biosynthetic pathway. In Xylella fastidiosa (strain Temecula1 / ATCC 700964), this protein is Ubiquinone biosynthesis O-methyltransferase.